The sequence spans 142 residues: MSVFNLTVVSAEQQIFSGQVESIQATGIEGELGILAGHTPLLTAIKPGIVKLTLEDGKEEVIYVSGGFLEVQPNVVTVLADTAIRGDELDGDRILAAKKRAEENIRTRHGDANYEMLASKLSKELAKLRAYELTEKLVKNKR.

This sequence belongs to the ATPase epsilon chain family. F-type ATPases have 2 components, CF(1) - the catalytic core - and CF(0) - the membrane proton channel. CF(1) has five subunits: alpha(3), beta(3), gamma(1), delta(1), epsilon(1). CF(0) has three main subunits: a, b and c.

Its subcellular location is the cell inner membrane. In terms of biological role, produces ATP from ADP in the presence of a proton gradient across the membrane. In Pasteurella multocida (strain Pm70), this protein is ATP synthase epsilon chain.